The primary structure comprises 292 residues: Succinate dehydrogenase assembly factor 2, mitochondrial (292 aa).

2 disordered regions span residues 27–68 (RSFG…NTTS) and 266–292 (TGFHAAKSKKTGGAGLGRMPNVQVFDS). Residues 55-68 (TNRPPNQHVPNTTS) show a composition bias toward polar residues.

This sequence belongs to the SDHAF2 family. Interacts with the flavoprotein subunit within the SDH catalytic dimer.

It localises to the mitochondrion matrix. Plays an essential role in the assembly of succinate dehydrogenase (SDH), an enzyme complex (also referred to as respiratory complex II) that is a component of both the tricarboxylic acid (TCA) cycle and the mitochondrial electron transport chain, and which couples the oxidation of succinate to fumarate with the reduction of ubiquinone (coenzyme Q) to ubiquinol. Required for flavinylation (covalent attachment of FAD) of the flavoprotein subunit of the SDH catalytic dimer. The sequence is that of Succinate dehydrogenase assembly factor 2, mitochondrial from Aspergillus flavus (strain ATCC 200026 / FGSC A1120 / IAM 13836 / NRRL 3357 / JCM 12722 / SRRC 167).